Consider the following 625-residue polypeptide: Ankyrin repeat domain-containing protein oryK (625 aa).

ANK repeat units lie at residues 1 to 27 (MDIYEAASQGRIDAIKFAVEQGCDVDG), 31 to 60 (DGKTPLWFAVQSGQPEACRFLMSLGAGRGP), 62 to 89 (NPSLLEVAVGGGYADIVALLWPHCNAER), 90 to 119 (EHRSLKTAISLGFHEIADFLIETGAFEYQD), 162 to 195 (FFDYALLLATKAGRNAGLRLVEFLLGESMPDVNC), 202 to 232 (QFETPLTAAAEKGNLEILATLIDHPNIDLTI), 500 to 530 (DTRCPLSWAAKSHNAPLVNALLRSPQVNVNF), 534 to 562 (SDRTPLLYAIAVNDRPIVERLLNHRDIDL), and 568 to 598 (EGRTAIFYAAQGGDLSIVQLLIGTQNVDFSI).

It participates in secondary metabolite biosynthesis. Its function is as follows. Ankyrin repeat domain-containing protein; part of the gene cluster that mediates the biosynthesis of oryzines, natural products with an unusual maleidride backbone. The two subunits of the fungal fatty acid synthase oryfasA and oryfasB probably form octenoic acid. This fatty acid is most likely activated by the acyl-CoA ligase oryP to give octenyl-CoA before the citrate synthase-like protein oryE catalyzes condensation with oxaloacetate to form tricarboxylic acid. The next steps of the pathways are conjectural, but a favorite possible route has been proposed, beginning with decarboxylation and concomitant dehydration by the decarboxylase oryM, followed by tautomerization, which may lead to the production of a diene intermediate. Reduction of this diene intermediate could give the known metabolite piliformic acid. On the pathway to oryzine B and oryzine A, however, hydroxylation of the diene by the alpha-ketoglutarate-dependent dioxygenase oryG and lactonisation by the lactonohydrolases oryH or oryL could give oryzine B directly. Finally, enoyl reduction by the dehydrogenase oryD would then convert oryzine B into oryzine A. This Aspergillus oryzae (strain ATCC 42149 / RIB 40) (Yellow koji mold) protein is Ankyrin repeat domain-containing protein oryK.